Reading from the N-terminus, the 291-residue chain is MKDYLVKALAFDGEVRAYSVRTTNTVSEAQRRHDTWRTASAALGRSLTAGTMMGAMLKGDQKLTIKVEGNGPIGPILVDAHANGDVRGYVTNPHVDFEGTEQGKLRVYQAVGTEGFVTVIKDIGMREPFIGQSPIVSGELGEDFTYYFAVSEQTPSSVGVGVLVNGDDSVLAAGGFILQIMPGAQEETISFIEDRLQKIPPVSTLIERGLSPEELLYAVLGEDKVKVLETMDVQFNCTCSRERIESVLISLGKTELEQIREEEEETEVHCHFCNERYKFSKEDITNLIENL.

2 disulfide bridges follow: Cys-237/Cys-239 and Cys-270/Cys-273.

It belongs to the HSP33 family. Under oxidizing conditions two disulfide bonds are formed involving the reactive cysteines. Under reducing conditions zinc is bound to the reactive cysteines and the protein is inactive.

It localises to the cytoplasm. Redox regulated molecular chaperone. Protects both thermally unfolding and oxidatively damaged proteins from irreversible aggregation. Plays an important role in the bacterial defense system toward oxidative stress. This chain is 33 kDa chaperonin, found in Bacillus cereus (strain G9842).